A 649-amino-acid polypeptide reads, in one-letter code: Acetyl-coenzyme A synthetase (649 aa).

Residues 189–192 (RGGK), threonine 311, and asparagine 335 each bind CoA. Residues 387-389 (GEP), 411-416 (DTWWQT), aspartate 500, and arginine 515 contribute to the ATP site. Position 523 (serine 523) interacts with CoA. An ATP-binding site is contributed by arginine 526. 3 residues coordinate Mg(2+): valine 537, histidine 539, and valine 542. Arginine 584 lines the CoA pocket. N6-acetyllysine is present on lysine 609.

Belongs to the ATP-dependent AMP-binding enzyme family. It depends on Mg(2+) as a cofactor. Acetylated. Deacetylation by the SIR2-homolog deacetylase activates the enzyme.

It catalyses the reaction acetate + ATP + CoA = acetyl-CoA + AMP + diphosphate. In terms of biological role, catalyzes the conversion of acetate into acetyl-CoA (AcCoA), an essential intermediate at the junction of anabolic and catabolic pathways. AcsA undergoes a two-step reaction. In the first half reaction, AcsA combines acetate with ATP to form acetyl-adenylate (AcAMP) intermediate. In the second half reaction, it can then transfer the acetyl group from AcAMP to the sulfhydryl group of CoA, forming the product AcCoA. The protein is Acetyl-coenzyme A synthetase of Sinorhizobium medicae (strain WSM419) (Ensifer medicae).